The following is a 295-amino-acid chain: uncharacterized protein (295 aa).

The signal sequence occupies residues M1–A26.

This is an uncharacterized protein from Archaeoglobus fulgidus (strain ATCC 49558 / DSM 4304 / JCM 9628 / NBRC 100126 / VC-16).